The sequence spans 150 residues: Ribonuclease H (150 aa).

In terms of domain architecture, RNase H type-1 spans 1 to 141; it reads MKFIEVHTDG…VDVLARNQAI (141 aa). Residues Asp-9, Glu-47, Asp-69, and Asp-133 each contribute to the Mg(2+) site.

It belongs to the RNase H family. In terms of assembly, monomer. Mg(2+) serves as cofactor.

It localises to the cytoplasm. It carries out the reaction Endonucleolytic cleavage to 5'-phosphomonoester.. Endonuclease that specifically degrades the RNA of RNA-DNA hybrids. The chain is Ribonuclease H from Xanthomonas euvesicatoria pv. vesicatoria (strain 85-10) (Xanthomonas campestris pv. vesicatoria).